A 272-amino-acid chain; its full sequence is Large ribosomal subunit protein uL2cz/uL2cy (272 aa).

Over residues 1–13 (MHLYKTSTPSTRN) the composition is skewed to polar residues. Disordered stretches follow at residues 1–27 (MHLY…PRNN) and 222–272 (NPVD…RRSK).

This sequence belongs to the universal ribosomal protein uL2 family. In terms of assembly, part of the 50S ribosomal subunit.

It localises to the plastid. Its subcellular location is the chloroplast. The protein is Large ribosomal subunit protein uL2cz/uL2cy (rpl2-A) of Buxus microphylla (Littleleaf boxwood).